The primary structure comprises 421 residues: Testin (421 aa).

Residues 92–199 enclose the PET domain; sequence MILTNPVAAK…GDVKLPCEMD (108 aa). The interval 133-164 is disordered; sequence EKQPVAGSEGAQYRKKQLAKQLPAHDQDPSKC. Basic and acidic residues predominate over residues 155–164; sequence PAHDQDPSKC. LIM zinc-binding domains are found at residues 234 to 297, 299 to 359, and 362 to 421; these read YSCY…CDSE, PRCA…NHAV, and QGCH…KMMS.

The protein belongs to the prickle / espinas / testin family. Interacts via LIM domain 1 with ZYX. Interacts (via LIM domain 3) with ENAH and VASP. Interacts with ALKBH4, talin, actin, alpha-actinin, GRIP1 and PXN. Interacts (via LIM domain 2) with ACTL7A (via N-terminus). Heterodimer with ACTL7A; the heterodimer interacts with ENAH to form a heterotrimer.

The protein localises to the cytoplasm. It localises to the cell junction. Its subcellular location is the focal adhesion. Functionally, scaffold protein that may play a role in cell adhesion, cell spreading and in the reorganization of the actin cytoskeleton. Plays a role in the regulation of cell proliferation. May act as a tumor suppressor. The chain is Testin (TES) from Callithrix jacchus (White-tufted-ear marmoset).